Reading from the N-terminus, the 122-residue chain is Small ribosomal subunit protein uS13 (122 aa).

Residues 97-122 (PVRGQRTHTNARTRKGPAKAIAGKKK) form a disordered region.

It belongs to the universal ribosomal protein uS13 family. In terms of assembly, part of the 30S ribosomal subunit. Forms a loose heterodimer with protein S19. Forms two bridges to the 50S subunit in the 70S ribosome.

Its function is as follows. Located at the top of the head of the 30S subunit, it contacts several helices of the 16S rRNA. In the 70S ribosome it contacts the 23S rRNA (bridge B1a) and protein L5 of the 50S subunit (bridge B1b), connecting the 2 subunits; these bridges are implicated in subunit movement. Contacts the tRNAs in the A and P-sites. The sequence is that of Small ribosomal subunit protein uS13 from Rhizobium rhizogenes (strain K84 / ATCC BAA-868) (Agrobacterium radiobacter).